The chain runs to 374 residues: Speckle-type POZ protein (374 aa).

An MATH domain is found at 31–161 (KFSYMWTINN…DDKLTLFCEV (131 aa)). Positions 71–191 (VNPKGLDEES…PDCRLADELG (121 aa)) are required for nuclear localization. One can recognise a BTB domain in the interval 173-297 (QNTMNMVKVP…MCEDALCTSL (125 aa)). The tract at residues 297–355 (LSVENAAEILILADLHSADQLKTQAVDFINYHASDVMETSGWKSMVASHPHLVAEAYRS) is homodimerization.

This sequence belongs to the Tdpoz family. Homodimer. Part of cullin-RING-based BCR (BTB-CUL3-RBX1) E3 ubiquitin-protein ligase complexes that contain CUL3 and SPOP, plus a target protein.

The protein localises to the nucleus. The protein resides in the nucleus speckle. The protein operates within protein modification; protein ubiquitination. Functionally, component of a cullin-RING-based BCR (BTB-CUL3-RBX1) E3 ubiquitin-protein ligase complex that mediates the ubiquitination of target proteins, leading most often to their proteasomal degradation. In Danio rerio (Zebrafish), this protein is Speckle-type POZ protein (spop).